The primary structure comprises 269 residues: Putative hydro-lyase RL2444 (269 aa).

This sequence belongs to the D-glutamate cyclase family.

The sequence is that of Putative hydro-lyase RL2444 from Rhizobium johnstonii (strain DSM 114642 / LMG 32736 / 3841) (Rhizobium leguminosarum bv. viciae).